The primary structure comprises 76 residues: Small ribosomal subunit protein uS17 (76 aa).

Belongs to the universal ribosomal protein uS17 family. As to quaternary structure, part of the 30S ribosomal subunit.

In terms of biological role, one of the primary rRNA binding proteins, it binds specifically to the 5'-end of 16S ribosomal RNA. The protein is Small ribosomal subunit protein uS17 of Dinoroseobacter shibae (strain DSM 16493 / NCIMB 14021 / DFL 12).